The chain runs to 335 residues: Probable tRNA N6-adenosine threonylcarbamoyltransferase (335 aa).

Positions 109, 113, and 130 each coordinate a divalent metal cation. Residues 130–134 (YVSGG), aspartate 162, glycine 177, glutamate 181, and asparagine 266 contribute to the substrate site. Aspartate 294 is a binding site for a divalent metal cation.

The protein belongs to the KAE1 / TsaD family. Component of the EKC/KEOPS complex; the whole complex dimerizes. A divalent metal cation is required as a cofactor.

It is found in the cytoplasm. The protein localises to the nucleus. The enzyme catalyses L-threonylcarbamoyladenylate + adenosine(37) in tRNA = N(6)-L-threonylcarbamoyladenosine(37) in tRNA + AMP + H(+). In terms of biological role, component of the EKC/KEOPS complex that is required for the formation of a threonylcarbamoyl group on adenosine at position 37 (t(6)A37) in tRNAs that read codons beginning with adenine. The complex is probably involved in the transfer of the threonylcarbamoyl moiety of threonylcarbamoyl-AMP (TC-AMP) to the N6 group of A37. Osgep likely plays a direct catalytic role in this reaction, but requires other protein(s) of the complex to fulfill this activity. The polypeptide is Probable tRNA N6-adenosine threonylcarbamoyltransferase (Nematostella vectensis (Starlet sea anemone)).